Reading from the N-terminus, the 281-residue chain is Large ribosomal subunit protein uL2 (281 aa).

The disordered stretch occupies residues 222-281 (TVRGSAMNPNDHPHGGGEGRQPIGRKSPMTPWGKRALGVKTRATKKASNQFIIRRRKETK).

It belongs to the universal ribosomal protein uL2 family. As to quaternary structure, part of the 50S ribosomal subunit. Forms a bridge to the 30S subunit in the 70S ribosome.

Its function is as follows. One of the primary rRNA binding proteins. Required for association of the 30S and 50S subunits to form the 70S ribosome, for tRNA binding and peptide bond formation. It has been suggested to have peptidyltransferase activity; this is somewhat controversial. Makes several contacts with the 16S rRNA in the 70S ribosome. This is Large ribosomal subunit protein uL2 from Metamycoplasma hominis (strain ATCC 23114 / DSM 25592 / NBRC 14850 / NCTC 10111 / PG21) (Mycoplasma hominis).